Here is a 495-residue protein sequence, read N- to C-terminus: ATP synthase subunit beta, chloroplastic (495 aa).

172–179 (GGAGVGKT) serves as a coordination point for ATP.

The protein belongs to the ATPase alpha/beta chains family. F-type ATPases have 2 components, CF(1) - the catalytic core - and CF(0) - the membrane proton channel. CF(1) has five subunits: alpha(3), beta(3), gamma(1), delta(1), epsilon(1). CF(0) has four main subunits: a(1), b(1), b'(1) and c(9-12).

The protein localises to the plastid. It localises to the chloroplast thylakoid membrane. It carries out the reaction ATP + H2O + 4 H(+)(in) = ADP + phosphate + 5 H(+)(out). In terms of biological role, produces ATP from ADP in the presence of a proton gradient across the membrane. The catalytic sites are hosted primarily by the beta subunits. The chain is ATP synthase subunit beta, chloroplastic from Barnardia japonica (Chinese squill).